A 531-amino-acid polypeptide reads, in one-letter code: Serine-type carboxypeptidase F (531 aa).

The N-terminal stretch at 1 to 25 (MLFRSLLSTAVLAVSLCTDNASAAK) is a signal peptide. A glycan (N-linked (GlcNAc...) asparagine) is linked at Asn20. Residues 26-52 (HGRFGQKARDAMNIAKRSANAVKHSLK) constitute a propeptide that is removed on maturation. N-linked (GlcNAc...) asparagine glycosylation is found at Asn63, Asn94, and Asn155. Ser211 is an active-site residue. N-linked (GlcNAc...) asparagine glycosylation is found at Asn228, Asn271, Asn309, and Asn378. Asp430 is a catalytic residue. N-linked (GlcNAc...) asparagine glycans are attached at residues Asn436 and Asn444. His507 is a catalytic residue.

This sequence belongs to the peptidase S10 family. As to quaternary structure, monomer.

Its activity is regulated as follows. Inhibited by DFP, and Hg(Cl)2. Functionally, removes any amino acid from the C-terminus of a long peptide. Digests preferentially peptides containing a positively charged residue in P1' position, as well as arginine, lysine or phenylalanine in P1 position of ester substrate. Also catalyzes peptide synthesis. This Aspergillus niger protein is Serine-type carboxypeptidase F (pepF).